The chain runs to 144 residues: 3-hydroxyacyl-[acyl-carrier-protein] dehydratase FabZ (144 aa).

Residue H51 is part of the active site.

Belongs to the thioester dehydratase family. FabZ subfamily.

Its subcellular location is the cytoplasm. It catalyses the reaction a (3R)-hydroxyacyl-[ACP] = a (2E)-enoyl-[ACP] + H2O. In terms of biological role, involved in unsaturated fatty acids biosynthesis. Catalyzes the dehydration of short chain beta-hydroxyacyl-ACPs and long chain saturated and unsaturated beta-hydroxyacyl-ACPs. This is 3-hydroxyacyl-[acyl-carrier-protein] dehydratase FabZ (fabZ2) from Lactococcus lactis subsp. lactis (strain IL1403) (Streptococcus lactis).